The chain runs to 1950 residues: E3 ubiquitin-protein ligase UBR1 (1950 aa).

Residues His-118, Cys-123, Cys-136, Cys-139, Cys-148, Cys-151, His-157, His-160, His-161, Cys-175, Cys-177, and Cys-189 each coordinate Zn(2+). The UBR-type zinc-finger motif lies at 121-194 (RNCGRKFKIG…SPLHCKAEEQ (74 aa)). Phosphoserine occurs at positions 296 and 300. Residues 678–681 (HVLH) form a ubiquitin-binding loop region. Residue Asp-952 participates in Zn(2+) binding. The UBC2-binding region (U2BR) stretch occupies residues 1165 to 1200 (KERKRRLAKKHQARLLAKFNNQQTKFMKEHESEFDE). Cys-1220, Cys-1223, Cys-1295, His-1297, His-1300, Cys-1303, Cys-1320, and Cys-1323 together coordinate Zn(2+). An RING-type; atypical zinc finger spans residues 1220–1324 (CALCQDSSST…SNAFICPLCQ (105 aa)). A cap helical domain (CHD) region spans residues 1333-1665 (LCQTSKANTG…YEYCGIIKLI (333 aa)). Cys-1703, Cys-1706, His-1722, Cys-1727, His-1763, and Asp-1775 together coordinate Zn(2+). 2 disordered regions span residues 1826 to 1846 (RPRR…GEDG) and 1893 to 1950 (TLQP…REIW). Composition is skewed to acidic residues over residues 1833-1846 (TDED…GEDG) and 1934-1950 (DEDD…REIW). Ser-1938 bears the Phosphoserine mark.

The protein belongs to the E3 ubiquitin-protein ligase UBR1-like family. Interacts with UBC2. Interacts with RPN2, RPT1 and RPT6 from the 26S proteasome.

The enzyme catalyses S-ubiquitinyl-[E2 ubiquitin-conjugating enzyme]-L-cysteine + [acceptor protein]-L-lysine = [E2 ubiquitin-conjugating enzyme]-L-cysteine + N(6)-ubiquitinyl-[acceptor protein]-L-lysine.. It functions in the pathway protein modification; protein ubiquitination. Functionally, ubiquitin ligase protein which is a component of the N-end rule pathway. Recognizes and binds to proteins bearing specific N-terminal residues that are destabilizing according to the N-end rule, leading to their ubiquitination and subsequent degradation. Recognizes both type-1 and type-2 N-degrons, containing positively charged amino acids (Arg, Lys and His) and bulky and hydrophobic amino acids, respectively. The protein is E3 ubiquitin-protein ligase UBR1 of Saccharomyces cerevisiae (strain ATCC 204508 / S288c) (Baker's yeast).